A 195-amino-acid polypeptide reads, in one-letter code: Auxin-responsive protein IAA14 (195 aa).

Disordered regions lie at residues 1–61 (MAAE…SPAS) and 85–107 (STAAAAKGKGGGETDQGRKNKGG). An EAR-like (transcriptional repression) motif is present at residues 10–14 (LRLGL). In terms of domain architecture, PB1 spans 108–191 (GLYVKVSMDG…SCKKLRIMRG (84 aa)).

Belongs to the Aux/IAA family. As to quaternary structure, homodimers and heterodimers. In terms of tissue distribution, highly expressed in flowers. Expressed in etiolated seedlings.

The protein resides in the nucleus. Functionally, aux/IAA proteins are short-lived transcriptional factors that function as repressors of early auxin response genes at low auxin concentrations. The protein is Auxin-responsive protein IAA14 (IAA14) of Oryza sativa subsp. japonica (Rice).